A 325-amino-acid chain; its full sequence is Leucine carboxyl methyltransferase 1 (325 aa).

S-adenosyl-L-methionine is bound by residues arginine 79, glycine 104, aspartate 127, 174–175 (DL), and glutamate 200.

It belongs to the methyltransferase superfamily. LCMT family.

The catalysed reaction is [phosphatase 2A protein]-C-terminal L-leucine + S-adenosyl-L-methionine = [phosphatase 2A protein]-C-terminal L-leucine methyl ester + S-adenosyl-L-homocysteine. In terms of biological role, methylates the carboxyl group of the C-terminal leucine residue of protein phosphatase 2A catalytic subunits to form alpha-leucine ester residues. This Eremothecium gossypii (strain ATCC 10895 / CBS 109.51 / FGSC 9923 / NRRL Y-1056) (Yeast) protein is Leucine carboxyl methyltransferase 1 (PPM1).